The following is a 443-amino-acid chain: Phosphoglucosamine mutase (443 aa).

Residue Ser103 is the Phosphoserine intermediate of the active site. Mg(2+) is bound by residues Ser103, Asp244, Asp246, and Asp248. Phosphoserine is present on Ser103.

This sequence belongs to the phosphohexose mutase family. Requires Mg(2+) as cofactor. Post-translationally, activated by phosphorylation.

It carries out the reaction alpha-D-glucosamine 1-phosphate = D-glucosamine 6-phosphate. Catalyzes the conversion of glucosamine-6-phosphate to glucosamine-1-phosphate. This is Phosphoglucosamine mutase from Pelagibacter ubique (strain HTCC1062).